Reading from the N-terminus, the 509-residue chain is Maturase K (509 aa).

This sequence belongs to the intron maturase 2 family. MatK subfamily.

The protein resides in the plastid. It is found in the chloroplast. Usually encoded in the trnK tRNA gene intron. Probably assists in splicing its own and other chloroplast group II introns. This is Maturase K from Clematis florida (Asian virgin's bower).